The chain runs to 440 residues: Damage-control phosphatase ARMT1 (440 aa).

Residues Asp252 and Asn253 each coordinate Mn(2+). 252-253 (DN) lines the substrate pocket. Residues Glu257 and Asp290 each coordinate S-adenosyl-L-methionine. Asp290 lines the Mn(2+) pocket. Residues 366 to 370 (DLNYR) and Lys403 contribute to the substrate site. The Subfamily III RTxK motif motif lies at 400 to 403 (RTLK).

Belongs to the damage-control phosphatase family. Sugar phosphate phosphatase III subfamily. Mn(2+) serves as cofactor. It depends on Ni(2+) as a cofactor. Post-translationally, automethylated.

The catalysed reaction is beta-D-fructose 1-phosphate + H2O = D-fructose + phosphate. It carries out the reaction beta-D-fructose 6-phosphate = dihydroxyacetone + D-glyceraldehyde 3-phosphate. It catalyses the reaction L-glutamyl-[protein] + S-adenosyl-L-methionine = [protein]-L-glutamate 5-O-methyl ester + S-adenosyl-L-homocysteine. In terms of biological role, metal-dependent phosphatase that shows phosphatase activity against several substrates, including fructose-1-phosphate and fructose-6-phosphate. Its preference for fructose-1-phosphate, a strong glycating agent that causes DNA damage rather than a canonical yeast metabolite, suggests a damage-control function in hexose phosphate metabolism. Has also been shown to have O-methyltransferase activity that methylates glutamate residues of target proteins to form gamma-glutamyl methyl ester residues. Possibly methylates PCNA, suggesting it is involved in the DNA damage response. The polypeptide is Damage-control phosphatase ARMT1 (Xenopus laevis (African clawed frog)).